The chain runs to 354 residues: Methylthioribose-1-phosphate isomerase (354 aa).

Residue aspartate 246 is the Proton donor of the active site.

Belongs to the eIF-2B alpha/beta/delta subunits family. MtnA subfamily.

The protein localises to the cytoplasm. Its subcellular location is the nucleus. It carries out the reaction 5-(methylsulfanyl)-alpha-D-ribose 1-phosphate = 5-(methylsulfanyl)-D-ribulose 1-phosphate. It participates in amino-acid biosynthesis; L-methionine biosynthesis via salvage pathway; L-methionine from S-methyl-5-thio-alpha-D-ribose 1-phosphate: step 1/6. In terms of biological role, catalyzes the interconversion of methylthioribose-1-phosphate (MTR-1-P) into methylthioribulose-1-phosphate (MTRu-1-P). This chain is Methylthioribose-1-phosphate isomerase (mri1), found in Xenopus laevis (African clawed frog).